Consider the following 864-residue polypeptide: Leucine--tRNA ligase (864 aa).

Residues 42-52 carry the 'HIGH' region motif; sequence PYPSGKLHMGH. The 'KMSKS' region signature appears at 624-628; it reads KMSKS. An ATP-binding site is contributed by Lys627.

The protein belongs to the class-I aminoacyl-tRNA synthetase family.

The protein resides in the cytoplasm. The enzyme catalyses tRNA(Leu) + L-leucine + ATP = L-leucyl-tRNA(Leu) + AMP + diphosphate. The sequence is that of Leucine--tRNA ligase from Burkholderia multivorans (strain ATCC 17616 / 249).